Reading from the N-terminus, the 104-residue chain is Translation initiation factor 1A (104 aa).

Positions 1-14 are enriched in low complexity; sequence MRGQQTPPQQPTRV. Residues 1-20 form a disordered region; the sequence is MRGQQTPPQQPTRVRTPREN. An S1-like domain is found at 12 to 87; that stretch reads TRVRTPRENE…EKCDVIWRYT (76 aa).

The protein belongs to the eIF-1A family.

Functionally, seems to be required for maximal rate of protein biosynthesis. Enhances ribosome dissociation into subunits and stabilizes the binding of the initiator Met-tRNA(I) to 40 S ribosomal subunits. This Methanococcus maripaludis (strain DSM 14266 / JCM 13030 / NBRC 101832 / S2 / LL) protein is Translation initiation factor 1A.